A 320-amino-acid chain; its full sequence is Malate dehydrogenase (320 aa).

Residues 10–15 (GSGMIG) and D34 contribute to the NAD(+) site. Substrate is bound by residues R83 and R89. NAD(+) is bound by residues N96 and 119 to 121 (ITN). Positions 121 and 152 each coordinate substrate. The active-site Proton acceptor is the H176.

It belongs to the LDH/MDH superfamily. MDH type 3 family.

The enzyme catalyses (S)-malate + NAD(+) = oxaloacetate + NADH + H(+). Its function is as follows. Catalyzes the reversible oxidation of malate to oxaloacetate. This Hyphomonas neptunium (strain ATCC 15444) protein is Malate dehydrogenase.